The following is a 298-amino-acid chain: Lipoyl synthase (298 aa).

[4Fe-4S] cluster-binding residues include C40, C45, C51, C67, C71, C74, and S280. Residues 53 to 269 form the Radical SAM core domain; sequence AVRRTATFMI…KEIALSKGFS (217 aa).

Belongs to the radical SAM superfamily. Lipoyl synthase family. [4Fe-4S] cluster serves as cofactor.

The protein resides in the cytoplasm. The enzyme catalyses [[Fe-S] cluster scaffold protein carrying a second [4Fe-4S](2+) cluster] + N(6)-octanoyl-L-lysyl-[protein] + 2 oxidized [2Fe-2S]-[ferredoxin] + 2 S-adenosyl-L-methionine + 4 H(+) = [[Fe-S] cluster scaffold protein] + N(6)-[(R)-dihydrolipoyl]-L-lysyl-[protein] + 4 Fe(3+) + 2 hydrogen sulfide + 2 5'-deoxyadenosine + 2 L-methionine + 2 reduced [2Fe-2S]-[ferredoxin]. It participates in protein modification; protein lipoylation via endogenous pathway; protein N(6)-(lipoyl)lysine from octanoyl-[acyl-carrier-protein]. Its function is as follows. Catalyzes the radical-mediated insertion of two sulfur atoms into the C-6 and C-8 positions of the octanoyl moiety bound to the lipoyl domains of lipoate-dependent enzymes, thereby converting the octanoylated domains into lipoylated derivatives. The polypeptide is Lipoyl synthase (Geobacillus thermodenitrificans (strain NG80-2)).